A 607-amino-acid chain; its full sequence is MSENVKKNWIKTIMESMGSLKRTHFCDALRKEDIGKQVILMGWVLRRRDHGGVIFIDLRDRRGITQVVFNPEINPEVHAKAHSLRSEWVLAIKGTVSARPGDMANTKLGTGDIEILVDELVILNTSETPPFPLDEETEVSENLRLQYRYLDLRRPAMARNLLLRHKAVQAIRNYLNDNEFLDIETPMLTRSTPEGARDYLVPSRVSAGKFYALPQSPQLFKQLLMIAGMDRYYQIVKCFRDEDLRADRQPEFTQIDMELSFVDEEQIIEVTEGMIQTLFKETLDLDLTPPFAHITYADSMERFGCDRPDMRFGMELVNLTEIAKSCSFKVFRAIAEEGGTVRAINAKACAHFSRKDLDGLTEYAALFGAKGLAWVKMKADGEWQSPIAKFFSEEERASIAEALDAQEGDLLFFGADSEKVVFQVLGELRLEMARRLDLLDKKEFNFVWVTDFPLMEYDEKEDRYQSIHHPFTAPREEDLDLLETAPDKALSRAYDLVLNGTEIGGGSIRIHQRDVQARVLTALGIDKEEADEKFGFLLRALELGAPPHGGLAFGLDRLMMLITGSDSIRNVIAFPKTQKAACLLTEAPATVARKQLTELYLRPDWKE.

Residue Glu-194 coordinates L-aspartate. Residues 218-221 (QLFK) form an aspartate region. Arg-240 provides a ligand contact to L-aspartate. ATP is bound by residues 240 to 242 (RDE) and Gln-249. Position 468 (His-468) interacts with L-aspartate. Residue Glu-502 participates in ATP binding. Residue Arg-509 coordinates L-aspartate. ATP is bound at residue 554-557 (GLDR).

This sequence belongs to the class-II aminoacyl-tRNA synthetase family. Type 1 subfamily. Homodimer.

The protein localises to the cytoplasm. The catalysed reaction is tRNA(Asx) + L-aspartate + ATP = L-aspartyl-tRNA(Asx) + AMP + diphosphate. Its function is as follows. Aspartyl-tRNA synthetase with relaxed tRNA specificity since it is able to aspartylate not only its cognate tRNA(Asp) but also tRNA(Asn). Reaction proceeds in two steps: L-aspartate is first activated by ATP to form Asp-AMP and then transferred to the acceptor end of tRNA(Asp/Asn). This Desulfotalea psychrophila (strain LSv54 / DSM 12343) protein is Aspartate--tRNA(Asp/Asn) ligase.